The following is a 354-amino-acid chain: Methylthioribose-1-phosphate isomerase (354 aa).

Substrate-binding positions include 58–60, R101, and Q204; that span reads RGA. The active-site Proton donor is the D245. Residue 255-256 coordinates substrate; the sequence is NK.

Belongs to the eIF-2B alpha/beta/delta subunits family. MtnA subfamily.

The enzyme catalyses 5-(methylsulfanyl)-alpha-D-ribose 1-phosphate = 5-(methylsulfanyl)-D-ribulose 1-phosphate. Its pathway is amino-acid biosynthesis; L-methionine biosynthesis via salvage pathway; L-methionine from S-methyl-5-thio-alpha-D-ribose 1-phosphate: step 1/6. Its function is as follows. Catalyzes the interconversion of methylthioribose-1-phosphate (MTR-1-P) into methylthioribulose-1-phosphate (MTRu-1-P). In Stenotrophomonas maltophilia (strain R551-3), this protein is Methylthioribose-1-phosphate isomerase.